Here is a 390-residue protein sequence, read N- to C-terminus: Phosphoprotein (390 aa).

Phosphothreonine is present on residues threonine 10 and threonine 16. A compositionally biased stretch (polar residues) spans 54–65 (QKNIQHPTASHQ). Disordered stretches follow at residues 54 to 98 (QKNI…EPLF) and 144 to 183 (RTSTPVTEFKRGAGSRAQGQTIQEEGIDGNGASAGSKERS). Position 69 is a phosphoserine (serine 69). Residues threonine 91, threonine 150, and threonine 164 each carry the phosphothreonine modification. Serine 187 carries the phosphoserine modification. Threonine 249 is modified (phosphothreonine). Serine 256 bears the Phosphoserine mark. A phosphothreonine mark is found at threonine 257 and threonine 281. Residues serine 291 and serine 293 each carry the phosphoserine modification. Threonine 297 is subject to Phosphothreonine. Phosphoserine occurs at positions 300 and 373. The segment at 342–390 (AGRKVMITKMITDCVANPQMKQAFEQRLAKASTEDALNDIKKDIIRSAI) is interaction with the nucleoprotein. At threonine 374 the chain carries Phosphothreonine.

It belongs to the rubulavirus/avulavirus P protein family. In terms of assembly, homotetramer. Interacts (via multimerization domain) with polymerase L; this interaction forms the polymerase L-P complex. Interacts (via N-terminus) with N0 (via Ncore); this interaction allows P to chaperon N0 to avoid N polymerization before encapsidation. Interacts (via C-terminus) with N-RNA template; this interaction positions the polymerase on the template for both transcription and replication. Interacts with host RPS6KB1 kinase; this interaction may play a role in the viral replication and transcription.

In terms of biological role, essential cofactor of the RNA polymerase L that plays a central role in the transcription and replication by forming the polymerase complex with RNA polymerase L and recruiting L to the genomic N-RNA template for RNA synthesis. Also plays a central role in the encapsidation of nascent RNA chains by forming the encapsidation complex with the nucleocapsid protein N (N-P complex). Acts as a chaperone for newly synthesized free N protein, so-called N0, allowing encapsidation of nascent RNA chains during replication. The nucleoprotein protein N prevents excessive phosphorylation of P, which leads to down-regulation of viral transcription/ replication. Participates, together with N, in the formation of viral factories (viroplasms), which are large inclusions in the host cytoplasm where replication takes place. The protein is Phosphoprotein (P/V) of Homo sapiens (Human).